Consider the following 459-residue polypeptide: Alcohol acyl transferase 1 allele RGc (459 aa).

Active-site proton acceptor residues include His164 and Asn385.

The protein belongs to the plant acyltransferase family. Expressed at very low levels in the skin of ripe fruit.

Its function is as follows. Involved in the biosynthesis of volatile esters which confer ripe apple fruit flavor. Alcohol acyl transferase that can use a wide range of alcohols as substrate to produce esters. The sequence is that of Alcohol acyl transferase 1 allele RGc from Malus domestica (Apple).